Here is a 186-residue protein sequence, read N- to C-terminus: Tegument protein UL55 (186 aa).

The protein belongs to the alphaherpesvirinae HHV-1 UL55 family.

It is found in the virion tegument. Its subcellular location is the host nucleus matrix. The chain is Tegument protein UL55 from Human herpesvirus 2 (strain HG52) (HHV-2).